The primary structure comprises 919 residues: Protein phosphatase 1 regulatory subunit 37 (919 aa).

LRR repeat units lie at residues 340–361, 368–388, 396–417, 425–445, 454–474, and 482–502; these read SLQYLDARNTPLLDHSAPFVAR, SLTVLHLENSGISGRPLMLLA, NLRELYLAENKLNGLQDSAQLG, NIQILDLRNNHILDSGLAYVC, GLVTLVLWNNQLTHNGMGYLA, and SLETLNLGHNAVGNEGVHKLK. Disordered regions lie at residues 626–716 and 790–866; these read ATED…TIPS and APSQ…APLP. A compositionally biased stretch (acidic residues) spans 631-640; it reads THEEEEEEEA. Residues 641 to 658 are compositionally biased toward basic and acidic residues; the sequence is SPLKKIEEETTDALKDAT. The span at 677–690 shows a compositional bias: acidic residues; sequence PQDDSDSDTEDEET. The span at 691–701 shows a compositional bias: low complexity; the sequence is PTNTSLTSTSP. Polar residues-rich tracts occupy residues 791-801 and 811-837; these read PSQTQNSTQPT and DAQQEDSVSTSTPSLDANIDQTQLTES. Residues 833-861 adopt a coiled-coil conformation; it reads QLTESVSEEEQKKAETLNNEADINEDANT.

Belongs to the PPP1R37 family.

May inhibit phosphatase activity of protein phosphatase 1 (PP1) complexes. The sequence is that of Protein phosphatase 1 regulatory subunit 37 (ppp1r37) from Danio rerio (Zebrafish).